The following is a 483-amino-acid chain: Cobyric acid synthase (483 aa).

Positions 244–430 (WLRVIAPVLP…LHGLFDHAEA (187 aa)) constitute a GATase cobBQ-type domain. Residue cysteine 325 is the Nucleophile of the active site. Histidine 422 is an active-site residue.

This sequence belongs to the CobB/CobQ family. CobQ subfamily.

It functions in the pathway cofactor biosynthesis; adenosylcobalamin biosynthesis. Its function is as follows. Catalyzes amidations at positions B, D, E, and G on adenosylcobyrinic A,C-diamide. NH(2) groups are provided by glutamine, and one molecule of ATP is hydrogenolyzed for each amidation. In Methylobacillus flagellatus (strain ATCC 51484 / DSM 6875 / VKM B-1610 / KT), this protein is Cobyric acid synthase.